Reading from the N-terminus, the 451-residue chain is Signal recognition particle protein (451 aa).

Residues 107 to 114 (GLQGSGKT), 190 to 194 (DTAGR), and 248 to 251 (TKTD) contribute to the GTP site.

Belongs to the GTP-binding SRP family. SRP54 subfamily. Part of the signal recognition particle protein translocation system, which is composed of SRP and FtsY. SRP is a ribonucleoprotein composed of Ffh and a 4.5S RNA molecule.

Its subcellular location is the cytoplasm. It catalyses the reaction GTP + H2O = GDP + phosphate + H(+). Functionally, involved in targeting and insertion of nascent membrane proteins into the cytoplasmic membrane. Binds to the hydrophobic signal sequence of the ribosome-nascent chain (RNC) as it emerges from the ribosomes. The SRP-RNC complex is then targeted to the cytoplasmic membrane where it interacts with the SRP receptor FtsY. Interaction with FtsY leads to the transfer of the RNC complex to the Sec translocase for insertion into the membrane, the hydrolysis of GTP by both Ffh and FtsY, and the dissociation of the SRP-FtsY complex into the individual components. The sequence is that of Signal recognition particle protein from Buchnera aphidicola subsp. Acyrthosiphon pisum (strain APS) (Acyrthosiphon pisum symbiotic bacterium).